Here is a 389-residue protein sequence, read N- to C-terminus: Na(+)/H(+) antiporter NhaA (389 aa).

A run of 11 helical transmembrane segments spans residues 17-37 (ILLL…LAGL), 59-79 (LLLW…GLEV), 95-115 (SLPT…YLLF), 124-144 (AGWA…MALL), 154-174 (VFLL…IALF), 177-197 (TDLS…LVAL), 213-233 (LVLW…GVII), 261-281 (FLIL…NMSL), 287-307 (PVPV…VMLF), 328-348 (IAPV…IASL), and 363-383 (LGTL…LSKV).

Belongs to the NhaA Na(+)/H(+) (TC 2.A.33) antiporter family.

It is found in the cell inner membrane. The catalysed reaction is Na(+)(in) + 2 H(+)(out) = Na(+)(out) + 2 H(+)(in). Its function is as follows. Na(+)/H(+) antiporter that extrudes sodium in exchange for external protons. The protein is Na(+)/H(+) antiporter NhaA of Shewanella sp. (strain MR-4).